The sequence spans 316 residues: Olfactory receptor 12D3 (316 aa).

Topologically, residues Met1–Pro23 are extracellular. The N-linked (GlcNAc...) asparagine glycan is linked to Asn3. A helical transmembrane segment spans residues Phe24–Leu44. Residues Val45–Gln52 lie on the Cytoplasmic side of the membrane. A helical transmembrane segment spans residues Leu53–Ser73. The Extracellular portion of the chain corresponds to Val74–Thr97. The cysteines at positions 95 and 187 are disulfide-linked. A helical membrane pass occupies residues Gln98 to Phe118. Topologically, residues Asp119–Gln137 are cytoplasmic. The chain crosses the membrane as a helical span at residues Val138–Ser158. Over Val159–Trp195 the chain is Extracellular. The chain crosses the membrane as a helical span at residues Leu196 to Ser215. The Cytoplasmic portion of the chain corresponds to Cys216–Ala236. The helical transmembrane segment at Leu237–Thr257 threads the bilayer. The Extracellular segment spans residues Tyr258–Asp270. A helical transmembrane segment spans residues Arg271 to Leu291. Residues Arg292–His316 lie on the Cytoplasmic side of the membrane.

The protein belongs to the G-protein coupled receptor 1 family.

It localises to the cell membrane. Its function is as follows. Odorant receptor. The chain is Olfactory receptor 12D3 (OR12D3) from Homo sapiens (Human).